A 155-amino-acid chain; its full sequence is MKTYSAKPSEIEKKWWVIDAKNIVLGRLASRVANMLRGKHKPSFTPHLDCGDNIIIINAEHVKLTGKKANPKDGKIYYRHTGFPGGLKDTTAGKILSSKHPERVIKMAVKRMITRNTLGAKQMSNLYVYANGDHPHMAQQPTVYDFASQNPKNKK.

It belongs to the universal ribosomal protein uL13 family. As to quaternary structure, part of the 50S ribosomal subunit.

In terms of biological role, this protein is one of the early assembly proteins of the 50S ribosomal subunit, although it is not seen to bind rRNA by itself. It is important during the early stages of 50S assembly. The sequence is that of Large ribosomal subunit protein uL13 from Rickettsia felis (strain ATCC VR-1525 / URRWXCal2) (Rickettsia azadi).